Reading from the N-terminus, the 424-residue chain is Serine hydroxymethyltransferase 2 (424 aa).

(6S)-5,6,7,8-tetrahydrofolate is bound by residues Leu-125 and 129–131 (GHL). Lys-234 bears the N6-(pyridoxal phosphate)lysine mark. Glu-250 lines the (6S)-5,6,7,8-tetrahydrofolate pocket.

It belongs to the SHMT family. In terms of assembly, homodimer. Pyridoxal 5'-phosphate serves as cofactor.

It is found in the cytoplasm. It carries out the reaction (6R)-5,10-methylene-5,6,7,8-tetrahydrofolate + glycine + H2O = (6S)-5,6,7,8-tetrahydrofolate + L-serine. The protein operates within one-carbon metabolism; tetrahydrofolate interconversion. It functions in the pathway amino-acid biosynthesis; glycine biosynthesis; glycine from L-serine: step 1/1. Its function is as follows. Catalyzes the reversible interconversion of serine and glycine with tetrahydrofolate (THF) serving as the one-carbon carrier. This reaction serves as the major source of one-carbon groups required for the biosynthesis of purines, thymidylate, methionine, and other important biomolecules. Also exhibits THF-independent aldolase activity toward beta-hydroxyamino acids, producing glycine and aldehydes, via a retro-aldol mechanism. This Burkholderia pseudomallei (strain 1710b) protein is Serine hydroxymethyltransferase 2.